A 704-amino-acid chain; its full sequence is Elongation factor G 1 (704 aa).

Positions 8 to 285 (EKIRNIGISA…AVCAFLPNPK (278 aa)) constitute a tr-type G domain. Residues 17-24 (AHIDSGKT), 84-88 (DTPGH), and 138-141 (NKMD) each bind GTP.

Belongs to the TRAFAC class translation factor GTPase superfamily. Classic translation factor GTPase family. EF-G/EF-2 subfamily.

The protein localises to the cytoplasm. Its function is as follows. Catalyzes the GTP-dependent ribosomal translocation step during translation elongation. During this step, the ribosome changes from the pre-translocational (PRE) to the post-translocational (POST) state as the newly formed A-site-bound peptidyl-tRNA and P-site-bound deacylated tRNA move to the P and E sites, respectively. Catalyzes the coordinated movement of the two tRNA molecules, the mRNA and conformational changes in the ribosome. This is Elongation factor G 1 from Myxococcus xanthus (strain DK1622).